A 142-amino-acid polypeptide reads, in one-letter code: Large ribosomal subunit protein uL13 (142 aa).

The protein belongs to the universal ribosomal protein uL13 family. In terms of assembly, part of the 50S ribosomal subunit.

In terms of biological role, this protein is one of the early assembly proteins of the 50S ribosomal subunit, although it is not seen to bind rRNA by itself. It is important during the early stages of 50S assembly. The polypeptide is Large ribosomal subunit protein uL13 (Serratia proteamaculans (strain 568)).